Consider the following 344-residue polypeptide: Unsaturated rhamnogalacturonyl hydrolase YesR (344 aa).

Residues 30-31, Asn-74, and 118-128 each bind substrate; these read DW and QHTVNAAEYVF. The active-site Proton donor is Asp-135. Residues 198–202 and 308–309 each bind substrate; these read RANGW and NA.

Belongs to the glycosyl hydrolase 105 family. In terms of assembly, monomer.

It localises to the cytoplasm. It carries out the reaction 2-O-(4-deoxy-beta-L-threo-hex-4-enopyranuronosyl)-alpha-L-rhamnose + H2O = 5-dehydro-4-deoxy-D-glucuronate + L-rhamnopyranose. Catalyzes the hydrolysis of unsaturated rhamnogalacturonan disaccharide to yield unsaturated D-galacturonic acid and L-rhamnose. It cannot act on unsaturated glucuronyl hydrolase (UGL) substrates containing unsaturated D-glucuronic acid at the non-reducing terminus, although the active pockets of YesR and UGL are very similar. The polypeptide is Unsaturated rhamnogalacturonyl hydrolase YesR (yesR) (Bacillus subtilis (strain 168)).